The following is a 583-amino-acid chain: Complement factor I (583 aa).

A signal peptide spans 1 to 18 (MKLLHVFLLFLCFHLRFC). 17 cysteine pairs are disulfide-bonded: C33-C255, C43-C54, C48-C59, C61-C93, C67-C86, C75-C106, C141-C181, C154-C214, C186-C196, C229-C247, C241-C256, C259-C271, C266-C284, C278-C293, C327-C453, C365-C381, and C373-C444. A Kazal-like domain is found at 55–108 (IEGTCVCKLPYQCPKNGTAVCATNRRSFPTYCQQKSLECLHPGTKFLNNGTCTA). N70 carries an N-linked (GlcNAc...) asparagine glycan. An N-linked (GlcNAc...) (complex) asparagine glycan is attached at N103. The 99-residue stretch at 114-212 (VSLKHGNTDS…TMGYQDFADV (99 aa)) folds into the SRCR domain. An N-linked (GlcNAc...) asparagine glycan is attached at N177. LDL-receptor class A domains lie at 213 to 257 (VCYT…LCCK) and 258 to 294 (ACQG…VGCA). Ca(2+)-binding residues include K239, D242, I244, D246, D252, and E253. Positions 276, 279, 281, 283, 289, and 290 each coordinate Ca(2+). A Peptidase S1 domain is found at 340–574 (IVGGKRAQLG…YFDWISYHVG (235 aa)). Residues H380 and D429 each act as charge relay system in the active site. 2 N-linked (GlcNAc...) asparagine glycosylation sites follow: N464 and N494. 3 disulfides stabilise this stretch: C467–C531, C495–C510, and C521–C550. Catalysis depends on S525, which acts as the Charge relay system. N536 carries N-linked (GlcNAc...) asparagine glycosylation.

The protein belongs to the peptidase S1 family. Heterodimer of a light and heavy chains; disulfide-linked. The fully processed and mature protein circulates as a zymogen, and is allosterically activated by substrate-induced remodeling of the active site. Interacts with C3b. Interacts with complement factor H. In terms of assembly, (Microbial infection) Interacts with Staphylococcus aureus clumping factor A/ClfA; this interaction enhances cleavage of C3b into iC3b by CFI. In terms of tissue distribution, expressed in the liver by hepatocytes. Also present in other cells such as monocytes, fibroblasts or keratinocytes.

The protein localises to the secreted. It is found in the extracellular space. It catalyses the reaction Inactivates complement subcomponents C3b, iC3b and C4b by proteolytic cleavage.. Its function is as follows. Trypsin-like serine protease that plays an essential role in regulating the immune response by controlling all complement pathways. Inhibits these pathways by cleaving three peptide bonds in the alpha-chain of C3b and two bonds in the alpha-chain of C4b thereby inactivating these proteins. Essential cofactors for these reactions include factor H and C4BP in the fluid phase and membrane cofactor protein/CD46 and CR1 on cell surfaces. The presence of these cofactors on healthy cells allows degradation of deposited C3b by CFI in order to prevent undesired complement activation, while in apoptotic cells or microbes, the absence of such cofactors leads to C3b-mediated complement activation and subsequent opsonization. The protein is Complement factor I (CFI) of Homo sapiens (Human).